The primary structure comprises 207 residues: Large ribosomal subunit protein uL4 (207 aa).

The disordered stretch occupies residues lysine 50–glutamine 75.

Belongs to the universal ribosomal protein uL4 family. Part of the 50S ribosomal subunit.

One of the primary rRNA binding proteins, this protein initially binds near the 5'-end of the 23S rRNA. It is important during the early stages of 50S assembly. It makes multiple contacts with different domains of the 23S rRNA in the assembled 50S subunit and ribosome. Its function is as follows. Forms part of the polypeptide exit tunnel. The polypeptide is Large ribosomal subunit protein uL4 (Rickettsia felis (strain ATCC VR-1525 / URRWXCal2) (Rickettsia azadi)).